The primary structure comprises 278 residues: Sulfide dehydrogenase subunit beta (278 aa).

The propeptide occupies 1–4 (MFKI). One can recognise an FAD-binding FR-type domain in the interval 1–95 (MFKILRKERL…LGPLGKPSHI (95 aa)). Residues Cys-222, Cys-225, and Cys-237 each coordinate [2Fe-2S] cluster.

In terms of assembly, heterodimer of alpha and beta subunits. FAD is required as a cofactor. It depends on [2Fe-2S] cluster as a cofactor.

It localises to the cytoplasm. The catalysed reaction is n sulfur + hydrogen sulfide + NADP(+) = (n+1) sulfur + NADPH. The enzyme catalyses 2 reduced [2Fe-2S]-[ferredoxin] + NADP(+) + H(+) = 2 oxidized [2Fe-2S]-[ferredoxin] + NADPH. A bifunctional enzyme that catalyzes the reduction of elemental sulfur or polysulfide to hydrogen sulfide with NADPH as electron donor. Also functions as a reduced ferredoxin:NADP oxidoreductase with a very high affinity for reduced ferredoxin. Exhibits a broad specificity for various physiological and non-physiological substrates with varied reduction potentials such as methyl viologen, benzyl viologen, FAD, FMN, methylene blue, 2,6-dichlorophenolindophenol (DCIP), cytochrome C and ferricyanide with highest preference for benzyl viologen. Does not reduce fumarate, succinate, nitrate, nitrite, sulfate, sulfite or protons. Does not possess any hydrogenase activity or NADPH-dependent glutamate synthase activity. This is Sulfide dehydrogenase subunit beta from Pyrococcus furiosus (strain ATCC 43587 / DSM 3638 / JCM 8422 / Vc1).